The chain runs to 283 residues: Peflin (283 aa).

8 tandem repeats follow at residues proline 21–glutamine 30, glutamine 36–proline 44, alanine 45–proline 54, serine 55–proline 62, alanine 71–glutamine 79, alanine 80–valine 87, proline 88–serine 95, and glutamine 96–glycine 104. Positions proline 21 to glycine 104 are 8 X 9 AA approximate tandem repeat of [AP]-P-G-G-P-Y-G-G-P-P. The segment covering proline 37–glycine 70 has biased composition (low complexity). Positions proline 37–glycine 113 are disordered. Residues alanine 71–proline 81 show a composition bias toward gly residues. Positions tyrosine 93–glycine 104 are enriched in low complexity. 5 EF-hand domains span residues glycine 113–serine 148, threonine 154–tryptophan 179, arginine 180–glutamine 215, leucine 216–methionine 252, and threonine 253–leucine 282. Ca(2+)-binding residues include aspartate 126, aspartate 128, serine 130, tyrosine 132, and glutamate 137. Positions 193, 195, 197, 199, and 204 each coordinate Ca(2+).

Heterodimer; heterodimerizes (via the EF-hand 5) with pdcd6.

The protein localises to the cytoplasm. The protein resides in the endoplasmic reticulum. It is found in the membrane. It localises to the cytoplasmic vesicle. Its subcellular location is the COPII-coated vesicle membrane. Its function is as follows. Calcium-binding protein that acts as an adapter that bridges unrelated proteins or stabilizes weak protein-protein complexes in response to calcium. Acts as a negative regulator of ER-Golgi transport. This chain is Peflin, found in Xenopus laevis (African clawed frog).